Reading from the N-terminus, the 251-residue chain is ATP synthase subunit a (251 aa).

Transmembrane regions (helical) follow at residues 14–34 (GFVK…LLAV), 78–98 (YLPF…FAVF), 107–127 (SLST…FYGI), 174–194 (MILA…MGVL), and 196–216 (LLIG…YIAA). The disordered stretch occupies residues 224 to 251 (NAGASDDEGGEDAKSACAAGGKICKHKP).

The protein belongs to the ATPase A chain family. As to quaternary structure, F-type ATPases have 2 components, CF(1) - the catalytic core - and CF(0) - the membrane proton channel. CF(1) has five subunits: alpha(3), beta(3), gamma(1), delta(1), epsilon(1). CF(0) has three main subunits: a(1), b(2) and c(9-12). The alpha and beta chains form an alternating ring which encloses part of the gamma chain. CF(1) is attached to CF(0) by a central stalk formed by the gamma and epsilon chains, while a peripheral stalk is formed by the delta and b chains.

The protein localises to the cell inner membrane. Functionally, key component of the proton channel; it plays a direct role in the translocation of protons across the membrane. The polypeptide is ATP synthase subunit a (Nitrosospira multiformis (strain ATCC 25196 / NCIMB 11849 / C 71)).